The following is a 191-amino-acid chain: Polysulfide reductase chain B (191 aa).

4Fe-4S ferredoxin-type domains are found at residues Tyr5–Val34, Gly50–Asp83, and Gly84–Val113. 16 residues coordinate [4Fe-4S] cluster: Cys14, Cys17, Cys20, Cys24, Cys61, Cys64, Cys69, Cys73, Cys93, Cys96, Cys99, Cys103, Cys120, Cys123, Cys136, and Cys140.

In terms of assembly, functional polysulfide reductase is made up of three different (A, B, and C) subunits.

In terms of biological role, component of the phosphorylative electron transport system with polysulfide as the terminal acceptor. The sequence is that of Polysulfide reductase chain B (psrB) from Wolinella succinogenes (strain ATCC 29543 / DSM 1740 / CCUG 13145 / JCM 31913 / LMG 7466 / NCTC 11488 / FDC 602W) (Vibrio succinogenes).